A 367-amino-acid chain; its full sequence is Embryonic developmental protein tofu-6 (367 aa).

The region spanning 13 to 92 (AGFHIRNIPK…FTLKVTDHKN (80 aa)) is the RRM domain. The segment at 298 to 345 (KSILADRLQRKGVCEYLPRSQQPHYAYSRETLLQHNNSGVTAQISNDA) is required for ife-3 interaction.

In terms of assembly, component of the pid-1 variant of the PETISCO complex (also called the pid-3, erh-2, tofu-6, and ife-3 small RNA complex) containing at least pid-1, tofu-6, ife-3, pid-3, and erh-2, which is required for the biogenesis of 21 nucleotide PIWI-interacting RNAs (piRNAs) that possess a uracil residue at the 5'-end (also called 21U-RNAs). Within the pid-1 variant of the PETISCO complex interacts with pid-1. Component of the tost-1 variant of the PETISCO complex (also called the pid-3, erh-2, tofu-6, and ife-3 small RNA complex) containing at least tost-1, tofu-6, ife-3, pid-3, and erh-2, which plays an essential role in embryogenesis. Within the tost-1 variant of the PETISCO complex interacts with tost-1. Within the pid-1 and tost-1 variants of the PETISCO complexes interacts (via C-terminus) with ife-3. Within the pid-1 and tost-1 variants of the PETISCO complexes interacts (via the RRM domain) with pid-3. Within the pid-1 and tost-1 variants of the PETISCO complexes interacts (via the RRM domain) with erh-2. In contrast to the pid-1 variant of the PETISCO complex, the tost-1 variant of the PETISCO complex plays a minor role in the biogenesis of 21U-RNAs. Interacts (via residues 120-314) with the PUCH complex subunit tofu-1 (via residues 82-172); the interaction between the PETISCO and PUCH complex members enhances piRNA production in vivo. Expression is restricted to the germline (at protein level).

The protein localises to the cytoplasm. The protein resides in the perinuclear region. It is found in the nucleus. Its function is as follows. Component of the pid-1 and tost-1 variants of the PETISCO complexes, which have roles in the biogenesis of a class of 21 nucleotide PIWI-interacting RNAs (piRNAs) that possess a uracil residue at the 5'-end (also called 21U-RNAs) and embryogenesis, respectively. Promotes the biogenesis of 21U-RNAs. Mediates the interaction between the PETISCO complex and the PUCH complex, the endoribonuclease complex processing the 5'-end of precursor piRNAs, thereby enhancing mature piRNA production. Required for chromosome segregation and cell division in early embryos. May have a role in DNA replication. The chain is Embryonic developmental protein tofu-6 from Caenorhabditis elegans.